We begin with the raw amino-acid sequence, 383 residues long: Bifunctional enzyme IspD/IspF (383 aa).

A 2-C-methyl-D-erythritol 4-phosphate cytidylyltransferase region spans residues 1 to 226 (MKIAAVIVAA…ERQIMSETIT (226 aa)). The segment at 227–383 (VTGQGYDVHR…QAIVTARLTT (157 aa)) is 2-C-methyl-D-erythritol 2,4-cyclodiphosphate synthase. Positions 233 and 235 each coordinate a divalent metal cation. Residues 233–235 (DVH) and 259–260 (HS) contribute to the 4-CDP-2-C-methyl-D-erythritol 2-phosphate site. His-267 provides a ligand contact to a divalent metal cation. 4-CDP-2-C-methyl-D-erythritol 2-phosphate is bound by residues 281–283 (DIG), 357–360 (TTTE), Phe-364, and Arg-367.

The protein in the N-terminal section; belongs to the IspD/TarI cytidylyltransferase family. IspD subfamily. In the C-terminal section; belongs to the IspF family. Requires a divalent metal cation as cofactor.

It catalyses the reaction 2-C-methyl-D-erythritol 4-phosphate + CTP + H(+) = 4-CDP-2-C-methyl-D-erythritol + diphosphate. The enzyme catalyses 4-CDP-2-C-methyl-D-erythritol 2-phosphate = 2-C-methyl-D-erythritol 2,4-cyclic diphosphate + CMP. The protein operates within isoprenoid biosynthesis; isopentenyl diphosphate biosynthesis via DXP pathway; isopentenyl diphosphate from 1-deoxy-D-xylulose 5-phosphate: step 2/6. It participates in isoprenoid biosynthesis; isopentenyl diphosphate biosynthesis via DXP pathway; isopentenyl diphosphate from 1-deoxy-D-xylulose 5-phosphate: step 4/6. In terms of biological role, bifunctional enzyme that catalyzes the formation of 4-diphosphocytidyl-2-C-methyl-D-erythritol from CTP and 2-C-methyl-D-erythritol 4-phosphate (MEP) (IspD), and catalyzes the conversion of 4-diphosphocytidyl-2-C-methyl-D-erythritol 2-phosphate (CDP-ME2P) to 2-C-methyl-D-erythritol 2,4-cyclodiphosphate (ME-CPP) with a corresponding release of cytidine 5-monophosphate (CMP) (IspF). In Maricaulis maris (strain MCS10) (Caulobacter maris), this protein is Bifunctional enzyme IspD/IspF.